The following is a 244-amino-acid chain: Large ribosomal subunit protein uL30B (244 aa).

The span at Met-1–Ser-11 shows a compositional bias: polar residues. The interval Met-1 to Lys-21 is disordered.

This sequence belongs to the universal ribosomal protein uL30 family. As to quaternary structure, component of the large ribosomal subunit (LSU). Mature yeast ribosomes consist of a small (40S) and a large (60S) subunit. The 40S small subunit contains 1 molecule of ribosomal RNA (18S rRNA) and 33 different proteins (encoded by 57 genes). The large 60S subunit contains 3 rRNA molecules (25S, 5.8S and 5S rRNA) and 46 different proteins (encoded by 81 genes).

It localises to the cytoplasm. Component of the ribosome, a large ribonucleoprotein complex responsible for the synthesis of proteins in the cell. The small ribosomal subunit (SSU) binds messenger RNAs (mRNAs) and translates the encoded message by selecting cognate aminoacyl-transfer RNA (tRNA) molecules. The large subunit (LSU) contains the ribosomal catalytic site termed the peptidyl transferase center (PTC), which catalyzes the formation of peptide bonds, thereby polymerizing the amino acids delivered by tRNAs into a polypeptide chain. The nascent polypeptides leave the ribosome through a tunnel in the LSU and interact with protein factors that function in enzymatic processing, targeting, and the membrane insertion of nascent chains at the exit of the ribosomal tunnel. This is Large ribosomal subunit protein uL30B from Saccharomyces cerevisiae (strain ATCC 204508 / S288c) (Baker's yeast).